A 436-amino-acid chain; its full sequence is UPF0597 protein YhaM (436 aa).

This sequence belongs to the UPF0597 family.

In Salmonella newport (strain SL254), this protein is UPF0597 protein YhaM.